The following is a 404-amino-acid chain: Arginine biosynthesis bifunctional protein ArgJ (404 aa).

Substrate is bound by residues threonine 166, lysine 189, threonine 200, glutamate 280, asparagine 399, and serine 404. Threonine 200 acts as the Nucleophile in catalysis.

It belongs to the ArgJ family. As to quaternary structure, heterotetramer of two alpha and two beta chains.

It localises to the cytoplasm. The enzyme catalyses N(2)-acetyl-L-ornithine + L-glutamate = N-acetyl-L-glutamate + L-ornithine. It carries out the reaction L-glutamate + acetyl-CoA = N-acetyl-L-glutamate + CoA + H(+). It functions in the pathway amino-acid biosynthesis; L-arginine biosynthesis; L-ornithine and N-acetyl-L-glutamate from L-glutamate and N(2)-acetyl-L-ornithine (cyclic): step 1/1. The protein operates within amino-acid biosynthesis; L-arginine biosynthesis; N(2)-acetyl-L-ornithine from L-glutamate: step 1/4. Functionally, catalyzes two activities which are involved in the cyclic version of arginine biosynthesis: the synthesis of N-acetylglutamate from glutamate and acetyl-CoA as the acetyl donor, and of ornithine by transacetylation between N(2)-acetylornithine and glutamate. This is Arginine biosynthesis bifunctional protein ArgJ from Mycobacterium bovis (strain ATCC BAA-935 / AF2122/97).